An 835-amino-acid polypeptide reads, in one-letter code: BCL11 transcription factor A (835 aa).

Residues 1–12 are compositionally biased toward basic residues; sequence MSRRKQGKPQHL. Residues 1–41 are disordered; that stretch reads MSRRKQGKPQHLSKREFSPEPLEAILTDDEPDHGPLGAPEG. The tract at residues 1–210 is required for nuclear body formation and for SUMO1 recruitment; the sequence is MSRRKQGKPQ…SEHGSPLTPR (210 aa). A C2HC-type zinc finger spans residues 45 to 71; it reads LLTCGQCQMNFPLGDILIFIEHKRKQC. Residues Cys-48, Cys-51, His-66, and Cys-71 each contribute to the Zn(2+) site. Residue Ser-86 is modified to Phosphoserine. Lys-123 participates in a covalent cross-link: Glycyl lysine isopeptide (Lys-Gly) (interchain with G-Cter in SUMO2). Ile-162 carries the post-translational modification Phosphothreonine. Residue Lys-164 forms a Glycyl lysine isopeptide (Lys-Gly) (interchain with G-Cter in SUMO2) linkage. Residues 170 to 193 form a C2H2-type 1 zinc finger; the sequence is YTCTTCKQPFTSAWFLLQHAQNTH. Ser-205 carries the post-translational modification Phosphoserine. Pro-214 carries the post-translational modification Phosphothreonine. An Asymmetric dimethylarginine modification is found at Arg-271. Residues 323 to 376 form a disordered region; it reads AGNTSSPPLSPGRPSPMQRLLQPFQPGSKPPFLATPPLPPLQSAPPPSQPPVKS. 2 positions are modified to phosphoserine: Ser-332 and Ser-337. Residues 355 to 372 are compositionally biased toward pro residues; the sequence is LATPPLPPLQSAPPPSQP. C2H2-type zinc fingers lie at residues 377–399 and 405–429; these read KSCEFCGKTFKFQSNLVVHRRSH and YKCNLCDHACTQASKLKRHMKTHMH. Over residues 421–430 the composition is skewed to basic residues; sequence KRHMKTHMHK. 3 disordered regions span residues 421-458, 471-512, and 572-619; these read KRHMKTHMHKSSPMTVKSDDGLSTASSPEPGTSDLVGS, KSEN…ERVD, and RSHL…GLSK. Residues 441–450 show a composition bias toward polar residues; the sequence is GLSTASSPEP. Phosphoserine is present on residues Ser-446 and Ser-447. Over residues 482-506 the composition is skewed to acidic residues; sequence NGDEEEEEDDEEEEEEEEEEEEELT. Positions 574 to 584 are enriched in basic and acidic residues; it reads HLAEAEGHRDT. Ser-608 carries the post-translational modification Phosphoserine. Lys-620 participates in a covalent cross-link: Glycyl lysine isopeptide (Lys-Gly) (interchain with G-Cter in SUMO2). Phosphoserine occurs at positions 625 and 630. Residue Lys-634 forms a Glycyl lysine isopeptide (Lys-Gly) (interchain with G-Cter in SUMO1) linkage. A compositionally biased stretch (low complexity) spans 682–696; it reads SPFASSSEHSSENGS. Residue Thr-701 is modified to Phosphothreonine. Positions 706 to 720 are enriched in gly residues; sequence LDGGISGRSGTGSGG. The interval 737-835 is DNA-binding; it reads EGRRSDTCEY…RVLNNDIKTE (99 aa). Residues 742-764 form a C2H2-type 4 zinc finger; that stretch reads DTCEYCGKVFKNCSNLTVHRRSH. Residues Cys-744, Cys-747, His-760, and His-764 each contribute to the Zn(2+) site. Polar residues predominate over residues 764-773; it reads HTGERPYKCE. The tract at residues 765–769 is disordered; sequence TGERP. The segment at 770–792 adopts a C2H2-type 5 zinc-finger fold; it reads YKCELCNYACAQSSKLTRHMKTH. Residues Cys-772, Cys-775, His-788, and His-792 each contribute to the Zn(2+) site. The interval 793–799 is disordered; sequence GQVGKDV. The C2H2-type 6 zinc finger occupies 800 to 823; it reads YKCEICKMPFSVYSTLEKHMKKWH. 4 residues coordinate Zn(2+): Cys-802, Cys-805, His-818, and His-823.

Homotetrameric; self-associates via C2HC-type zinc finger domain. Interacts with MTA2, a component of the nucleosome remodeling and deacetylase (NuRD) repressor complex. Interacts with NR2F1, PIAS3, NR2F2 and NR2F6. Interacts with TBR1. Post-translationally, sumoylated with SUMO1. As to expression, isoforms are expressed in a tissue-specific fashion. Isoforms 1, isoform 2, and isoform 3 are expressed at similar levels in testis, kidney and spleen. Isoform 1 is expressed in the stomach, and isoform 2 is expressed exclusively in the lung. Overexpression following proviral integration in hematopoietic cells results in the generation of myeloid leukemia.

Its subcellular location is the cytoplasm. The protein localises to the nucleus. Functionally, transcription factor. Associated with the BAF SWI/SNF chromatin remodeling complex. Binds to the 5'-TGACCA-3' sequence motif in regulatory regions of target genes. Involved in brain development. May play a role in hematopoiesis. Essential factor in lymphopoiesis, required for B-cell formation in fetal liver. May function as a modulator of the transcriptional repression activity of NR2F2. This chain is BCL11 transcription factor A (Bcl11a), found in Mus musculus (Mouse).